Here is a 312-residue protein sequence, read N- to C-terminus: Photosystem I assembly protein Ycf4 (312 aa).

Transmembrane regions (helical) follow at residues 42–62, 91–111, and 113–133; these read WAFI…SSYF, IILF…GLFL, and FYLW…IYIY.

The protein belongs to the Ycf4 family.

Its subcellular location is the plastid. The protein localises to the chloroplast thylakoid membrane. Seems to be required for the assembly of the photosystem I complex. The protein is Photosystem I assembly protein Ycf4 of Pleurastrum terricola (Filamentous green alga).